The sequence spans 205 residues: Holliday junction branch migration complex subunit RuvA (205 aa).

Residues 1–65 (MIAKLKGILD…EDRIHLFGFL (65 aa)) form a domain I region. The tract at residues 66–144 (DNTEKVAFNM…NINTIANNTS (79 aa)) is domain II. The flexible linker stretch occupies residues 145–153 (LATLSTDSN). A domain III region spans residues 154–205 (THDNILSDAITALIALGISRAEATQILSDIYALSPSISVNELVRTALQRRAK).

It belongs to the RuvA family. As to quaternary structure, homotetramer. Forms an RuvA(8)-RuvB(12)-Holliday junction (HJ) complex. HJ DNA is sandwiched between 2 RuvA tetramers; dsDNA enters through RuvA and exits via RuvB. An RuvB hexamer assembles on each DNA strand where it exits the tetramer. Each RuvB hexamer is contacted by two RuvA subunits (via domain III) on 2 adjacent RuvB subunits; this complex drives branch migration. In the full resolvosome a probable DNA-RuvA(4)-RuvB(12)-RuvC(2) complex forms which resolves the HJ.

The protein localises to the cytoplasm. The RuvA-RuvB-RuvC complex processes Holliday junction (HJ) DNA during genetic recombination and DNA repair, while the RuvA-RuvB complex plays an important role in the rescue of blocked DNA replication forks via replication fork reversal (RFR). RuvA specifically binds to HJ cruciform DNA, conferring on it an open structure. The RuvB hexamer acts as an ATP-dependent pump, pulling dsDNA into and through the RuvAB complex. HJ branch migration allows RuvC to scan DNA until it finds its consensus sequence, where it cleaves and resolves the cruciform DNA. The protein is Holliday junction branch migration complex subunit RuvA of Orientia tsutsugamushi (strain Ikeda) (Rickettsia tsutsugamushi).